A 149-amino-acid polypeptide reads, in one-letter code: Arginine regulator (149 aa).

Belongs to the ArgR family.

The protein localises to the cytoplasm. It participates in amino-acid degradation; L-arginine degradation via ADI pathway. Its function is as follows. Regulates the transcription of the arc operon, involved in arginine catabolism. This chain is Arginine regulator (argR1), found in Bacillus thuringiensis subsp. konkukian (strain 97-27).